The chain runs to 99 residues: ATP-dependent Clp protease adapter protein ClpS (99 aa).

Belongs to the ClpS family. In terms of assembly, binds to the N-terminal domain of the chaperone ClpA.

In terms of biological role, involved in the modulation of the specificity of the ClpAP-mediated ATP-dependent protein degradation. The chain is ATP-dependent Clp protease adapter protein ClpS from Helicobacter hepaticus (strain ATCC 51449 / 3B1).